Consider the following 229-residue polypeptide: Uracil-DNA glycosylase (229 aa).

Asp-64 acts as the Proton acceptor in catalysis.

The protein belongs to the uracil-DNA glycosylase (UDG) superfamily. UNG family.

It localises to the cytoplasm. The catalysed reaction is Hydrolyzes single-stranded DNA or mismatched double-stranded DNA and polynucleotides, releasing free uracil.. Functionally, excises uracil residues from the DNA which can arise as a result of misincorporation of dUMP residues by DNA polymerase or due to deamination of cytosine. This is Uracil-DNA glycosylase from Escherichia coli (strain 55989 / EAEC).